A 1062-amino-acid polypeptide reads, in one-letter code: Histone H3-lysine(4) N-trimethyltransferase ATX1 (1062 aa).

The disordered stretch occupies residues 159 to 184; that stretch reads NAFSGNKQNGSSRRKGSSSKNQDKAT. The PWWP domain maps to 301 to 365; the sequence is PGDIVWAKLA…VKQAISFIKG (65 aa). Positions 401-424 are disordered; it reads QLQKGADSVDSDMANSTEEGNSGG. Positions 441–500 constitute an FYR N-terminal domain; it reads DFRHIIGDLLIINLGKVVTDSQFFKDENHIWPEGYTAMRKFTSLTDHSASALYKMEVLRD. Residues 504–586 enclose the FYR C-terminal domain; that stretch reads KTHPLFIVTA…RPSSHVSMCK (83 aa). Residues 591-647 form a Phorbol-ester/DAG-type zinc finger; the sequence is RHQNQPTGYRPVRVDWKDLDKCNVCHMDEEYENNLFLQCDKCRMMVHAKCYGELEPC. Positions 599-1062 are interaction with PIP5; sequence YRPVRVDWKD…RCDLIDWTAE (464 aa). The PHD-type 1 zinc finger occupies 609–660; that stretch reads LDKCNVCHMDEEYENNLFLQCDKCRMMVHAKCYGELEPCDGALWLCNLCRPG. The C2HC pre-PHD-type zinc finger occupies 665 to 698; it reads PPRCCLCPVVGGAMKPTTDGRWAHLACAIWIPET. The PHD-type 2 zinc finger occupies 722–785; that stretch reads LMCTICGVSY…RMLSFCKRHR (64 aa). Residues 898–1016 form the SET domain; it reads KRLAFGKSGI…KWEELTYDYR (119 aa). Position 908 (His908) interacts with S-adenosyl-L-methionine. The O-linked (GlcNAc) serine glycan is linked to Ser947. Residues Tyr954 and 977–978 contribute to the S-adenosyl-L-methionine site; that span reads NH. Zn(2+) contacts are provided by Cys980, Cys1026, Cys1028, and Cys1033. Positions 1022–1038 constitute a Post-SET domain; it reads ERLSCSCGFPGCRGVVN.

The protein belongs to the class V-like SAM-binding methyltransferase superfamily. Histone-lysine methyltransferase family. TRX/MLL subfamily. Interacts with PIP5. Interacts with WDR5A. Binds to CLF in the nucleus. Interacts with NRPB1 CTD domain, especially when NRPB1 is phosphorylated on 'Ser-5' of the heptapeptide repeat. Component of a nuclear protein complex containing at least TATA binding proteins (TBPs, e.g. TBP1 and TBP2) and ATX1. Associates with ULT1 for trimethylating 'Lys-4' on histone H3 (H3K4me3) at flower MADS box gene loci. Interacts with SEC. As to quaternary structure, interacts with A4/EF1A in the cytoplasm on the nuclear periphery. Activated via O-glycosylation by SEC; this modification triggers FLC locus H3K4me3 histone modification, thus preventing premature flowering. Strongly expressed in cotyledons, but weak levels in the first true leaves, except at the hydothodes. Ubiquitous with higher levels in dividing tissues, including inflorescence meristem and flower primordia. Expressed also in leaves (especially at hydathodes), in growing inflorescence stems and in the mature flowers. As to expression, strongly expressed in young seedlings.

It is found in the nucleus. The protein resides in the cytoplasm. It localises to the perinuclear region. It carries out the reaction L-lysyl(4)-[histone H3] + 3 S-adenosyl-L-methionine = N(6),N(6),N(6)-trimethyl-L-lysyl(4)-[histone H3] + 3 S-adenosyl-L-homocysteine + 3 H(+). The enzyme catalyses L-lysyl-[protein] + 3 S-adenosyl-L-methionine = N(6),N(6),N(6)-trimethyl-L-lysyl-[protein] + 3 S-adenosyl-L-homocysteine + 3 H(+). In terms of biological role, binds to the promoter and regulates the transcription of target genes, maintaining them in an active state; at promoters, required for TATA binding proteins (TBPs, e.g. TBP1 and TBP2) and RNA polymerase II (Pol II) recruitment, and, in a subsequent event, is recruited by a phosphorylated form of Pol II to the +300-bp region of transcribed sequences to trimethylates nucleosomes. Histone trimethyltransferase that trimethylates 'Lys-4' of histone H3 (H3K4me3); H3 'Lys-4' methylation represents a specific tag for epigenetic transcriptional activation and is required for efficient elongation of transcription but not for transcription initiation. Methylates only a limited fraction of nucleosomes of target genes (e.g. FLC, NAP, XTH33 and WRKY70). Necessary for WDR5A occupancy at WRKY70 and LTP7 genes. Required to maintain the active state of class A (AP1 and AP2), class B (PI and AP3) and class C (AG, AGAMOUS) floral homeotic genes at early stages of flower development. Together with CLF, modulates AG nucleosome methylation statement. Involved in epigenetic regulation (e.g. H3K4me3) of the floral repressors FLC, FT and SOC1 to prevent the transition from vegetative to reproductive development, independently of the photoperiod; binds the active FLC locus before flowering, but this interaction is released upon the transition to flowering. Regulates floral organ identity and flowering transition. Functions as a receptor for the lipid messenger phosphatidylinositol 5-phosphate (PI5P), which negatively regulates its transcriptional activation activity. Exhibits histone methylase activity and subsequent transcriptional regulation on WRKY70 gene, and, to a lower extent on secondary defense-response targets salicylic acid (SA)-responsive gene PR1 and jasmonic acid (JA)-responsive gene THI2.1. Involved in response to dehydration stress-response in both abscisic acid (ABA)-dependent and ABA-independent pathways; this includes specific genes (e.g. COR15A, ADH1, CBF4, RD29A, RD29B, RD26, ABF3, NCED3 and ABA3) epigenetic regulation (e.g. H3K4me3 and Pol II recruitment) to promote their transcription and influence ABA production. Implicated in stomatal closure regulation. Indirect repressor of XTH genes (XTH33). Necessary for the phosphorylation of Pol II NRPB1 (e.g. Ser5P and Ser2P) at the promoters of target genes, thus regulating both early and late stages of transcription. Controls root growth and architecture by regulating the timing of root development, stem cell niche maintenance (e.g. quiescent center (QC)), and cell patterning during primary and lateral root development. Modulates cell cycle duration, cell production, and the transition from cell proliferation in the root apical meristem (RAM) to cell elongation. Functionally, trimethylates A4/EF1A post-translationally at Lys-396. Required for actin cytoskeleton organization. This chain is Histone H3-lysine(4) N-trimethyltransferase ATX1, found in Arabidopsis thaliana (Mouse-ear cress).